Consider the following 716-residue polypeptide: Amino-acid acetyltransferase, mitochondrial (716 aa).

A mitochondrion-targeting transit peptide spans 1–44 (MSPHTGWPRTVNSSLLKKHRSSLCTCQHTSSFLPRSFSTTADRH). Disordered stretches follow at residues 99–119 (YPKS…APTL) and 487–508 (LSSS…TVYP). Over residues 102-112 (SPDENKPEPEK) the composition is skewed to basic and acidic residues. The segment covering 497–508 (GPTNNGQGTVYP) has biased composition (polar residues). Residues 537–706 (SRPRLKLDDP…YEAVCRSTQP (170 aa)) enclose the N-acetyltransferase domain.

This sequence belongs to the acetyltransferase family.

It is found in the mitochondrion. It carries out the reaction L-glutamate + acetyl-CoA = N-acetyl-L-glutamate + CoA + H(+). Its pathway is amino-acid biosynthesis; L-arginine biosynthesis; N(2)-acetyl-L-ornithine from L-glutamate: step 1/4. In terms of biological role, N-acetylglutamate synthase involved in arginine biosynthesis. The polypeptide is Amino-acid acetyltransferase, mitochondrial (arg2) (Neosartorya fischeri (strain ATCC 1020 / DSM 3700 / CBS 544.65 / FGSC A1164 / JCM 1740 / NRRL 181 / WB 181) (Aspergillus fischerianus)).